The primary structure comprises 1349 residues: Zinc finger protein 804B (1349 aa).

The C2H2-type zinc finger occupies 55–79; sequence FYCELCDKQYHKHQEFDNHINSYDH. A disordered region spans residues 985-1010; sequence YASESRNDQDSAIPRTTEKDKSKSSH.

This Homo sapiens (Human) protein is Zinc finger protein 804B (ZNF804B).